The following is a 550-amino-acid chain: Carnitine transporter (550 aa).

12 helical membrane passes run 15 to 35, 53 to 73, 92 to 112, 137 to 157, 196 to 216, 230 to 250, 263 to 283, 317 to 337, 347 to 367, 401 to 421, 451 to 471, and 477 to 497; these read FLAVTSLLFVFISVAGLAIYS, FTTPVLLFAFLAIIFTFGLAF, SWIFMFILSGIGSSTLYWGFL, VAYSFFHSGLSAWAIYALASI, MFLLCMFGALTISLVLTAVTF, FMTKVIIILAVSVLFALSSYV, VCLGVVLFAIYVLCFGPTQFI, WTVFYWLWWISYAPGVALFVT, EVIFAMVIGGSVGLWFIFGVF, LLPAGKLMMWIFLGIMVVFLA, LFWCVMLTLVPIAMIFSKAPL, and ATIVTALPFIVIILIQTYGLV.

Belongs to the BCCT transporter (TC 2.A.15) family.

The protein resides in the cell inner membrane. With respect to regulation, inhibited by the protonophore 3,3',4',5-tetrachlorosalicylanilide (TCS). Not activated by osmolarity. In terms of biological role, catalyzes the energy-dependent uptake of carnitine and is essential for growth on carnitine. Can also mediate the uptake of choline. Is probably a proton:substrate symporter. The protein is Carnitine transporter of Acinetobacter baumannii (strain ATCC 19606 / DSM 30007 / JCM 6841 / CCUG 19606 / CIP 70.34 / NBRC 109757 / NCIMB 12457 / NCTC 12156 / 81).